Reading from the N-terminus, the 473-residue chain is Sulfate adenylyltransferase subunit 1 (473 aa).

The 220-residue stretch at 19–238 (KTLLKFLTCG…IKIKNSISSE (220 aa)) folds into the tr-type G domain. The G1 stretch occupies residues 28-35 (GSVDDGKS). 28 to 35 (GSVDDGKS) serves as a coordination point for GTP. The G2 stretch occupies residues 86-90 (GITID). Residues 107-110 (DTPG) form a G3 region. Residues 107 to 111 (DTPGH) and 162 to 165 (NKMD) each bind GTP. The segment at 162–165 (NKMD) is G4. The G5 stretch occupies residues 200-202 (SAL).

It belongs to the TRAFAC class translation factor GTPase superfamily. Classic translation factor GTPase family. CysN/NodQ subfamily. In terms of assembly, heterodimer composed of CysD, the smaller subunit, and CysN.

It catalyses the reaction sulfate + ATP + H(+) = adenosine 5'-phosphosulfate + diphosphate. It participates in sulfur metabolism; hydrogen sulfide biosynthesis; sulfite from sulfate: step 1/3. Functionally, with CysD forms the ATP sulfurylase (ATPS) that catalyzes the adenylation of sulfate producing adenosine 5'-phosphosulfate (APS) and diphosphate, the first enzymatic step in sulfur assimilation pathway. APS synthesis involves the formation of a high-energy phosphoric-sulfuric acid anhydride bond driven by GTP hydrolysis by CysN coupled to ATP hydrolysis by CysD. This chain is Sulfate adenylyltransferase subunit 1, found in Buchnera aphidicola subsp. Acyrthosiphon pisum (strain Tuc7).